The primary structure comprises 340 residues: Sterol-4-alpha-carboxylate 3-dehydrogenase erg26, decarboxylating (340 aa).

Tyr144 acts as the Proton acceptor in catalysis. Lys148 is an NAD(+) binding site.

This sequence belongs to the 3-beta-HSD family. Heterotetramer of erg25, erg26, erg27 and erg28. Erg28 acts as a scaffold to tether erg27 and other 4,4-demethylation-related enzymes, forming a demethylation enzyme complex, in the endoplasmic reticulum.

It localises to the endoplasmic reticulum membrane. The enzyme catalyses 4beta-methylzymosterol-4alpha-carboxylate + NADP(+) = 3-dehydro-4-methylzymosterol + CO2 + NADPH. The protein operates within steroid biosynthesis; zymosterol biosynthesis; zymosterol from lanosterol: step 4/6. It functions in the pathway steroid metabolism; ergosterol biosynthesis. In terms of biological role, sterol-4-alpha-carboxylate 3-dehydrogenase; part of the third module of ergosterol biosynthesis pathway that includes by the late steps of the pathway. Erg26 is a catalytic component of the C-4 demethylation complex that catalyzes the oxidative decarboxylation that results in a reduction of the 3-beta-hydroxy group at the C-3 carbon to an oxo group. The third module or late pathway involves the ergosterol synthesis itself through consecutive reactions that mainly occur in the endoplasmic reticulum (ER) membrane. Firstly, the squalene synthase erg9 catalyzes the condensation of 2 farnesyl pyrophosphate moieties to form squalene, which is the precursor of all steroids. Secondly, squalene is converted into lanosterol by the consecutive action of the squalene epoxidase erg1 and the lanosterol synthase erg7. The lanosterol 14-alpha-demethylase erg11/cyp1 catalyzes C14-demethylation of lanosterol to produce 4,4'-dimethyl cholesta-8,14,24-triene-3-beta-ol. In the next steps, a complex process involving various demethylation, reduction and desaturation reactions catalyzed by the C-14 reductase erg24 and the C-4 demethylation complex erg25-erg26-erg27 leads to the production of zymosterol. Erg28 likely functions in the C-4 demethylation complex reaction by tethering erg26 and Erg27 to the endoplasmic reticulum or to facilitate interaction between these proteins. Then, the sterol 24-C-methyltransferase erg6 catalyzes the methyl transfer from S-adenosyl-methionine to the C-24 of zymosterol to form fecosterol. The C-8 sterol isomerase erg2 catalyzes the reaction which results in unsaturation at C-7 in the B ring of sterols and thus converts fecosterol to episterol. The sterol-C5-desaturases erg31 and erg32 then catalyze the introduction of a C-5 double bond in the B ring to produce 5-dehydroepisterol. The C-22 sterol desaturase erg5 further converts 5-dehydroepisterol into ergosta-5,7,22,24(28)-tetraen-3beta-ol by forming the C-22(23) double bond in the sterol side chain. Finally, ergosta-5,7,22,24(28)-tetraen-3beta-ol is substrate of the C-24(28) sterol reductase erg4 to produce ergosterol. In the genus Schizosaccharomyces, a second route exists between lanosterol and fecosterol, via the methylation of lanosterol to eburicol by erg6, followed by C14-demethylation by erg11/cyp1 and C4-demethylation by the demethylation complex erg25-erg26-erg27. This is Sterol-4-alpha-carboxylate 3-dehydrogenase erg26, decarboxylating from Schizosaccharomyces pombe (strain 972 / ATCC 24843) (Fission yeast).